Consider the following 231-residue polypeptide: MGHKSNPIGLRLQINRTWDSRWYAEGRNYAQMLEEDLKIRKYIVENLPQAAISKVVIERPAKLCRVSIYAARPGVIIGKKGADIEKLRSKLATMTGSDVKLNIVEIRKPEIDSKLVAQGVADQLVRRVAFRRAMKRAVQSALRLGAEGIKITCGGRLGGAEIARVEWYREGRVPLHTLRANIDYAEAEAHTAYGVIGIKVWIFKGEILGHDPMAQDRLMMEAQTSGVRPAR.

The 69-residue stretch at 39 to 107 (IRKYIVENLP…DVKLNIVEIR (69 aa)) folds into the KH type-2 domain.

Belongs to the universal ribosomal protein uS3 family. As to quaternary structure, part of the 30S ribosomal subunit. Forms a tight complex with proteins S10 and S14.

Its function is as follows. Binds the lower part of the 30S subunit head. Binds mRNA in the 70S ribosome, positioning it for translation. In Novosphingobium aromaticivorans (strain ATCC 700278 / DSM 12444 / CCUG 56034 / CIP 105152 / NBRC 16084 / F199), this protein is Small ribosomal subunit protein uS3.